We begin with the raw amino-acid sequence, 564 residues long: Potassium-transporting ATPase potassium-binding subunit (564 aa).

A run of 10 helical transmembrane segments spans residues 7-27 (LLIL…GRFF), 67-87 (AWAL…MLML), 135-155 (VGLT…LVAL), 179-199 (LYAL…QGVP), 258-278 (FELV…GHYV), 286-306 (AILG…LWAE), 382-402 (VGLN…GLMI), 420-440 (LLVA…AIAA), 487-507 (LMLS…VLAL), and 528-548 (GLLF…LTFL).

It belongs to the KdpA family. As to quaternary structure, the system is composed of three essential subunits: KdpA, KdpB and KdpC.

Its subcellular location is the cell inner membrane. In terms of biological role, part of the high-affinity ATP-driven potassium transport (or Kdp) system, which catalyzes the hydrolysis of ATP coupled with the electrogenic transport of potassium into the cytoplasm. This subunit binds the periplasmic potassium ions and delivers the ions to the membrane domain of KdpB through an intramembrane tunnel. The polypeptide is Potassium-transporting ATPase potassium-binding subunit (Pseudomonas syringae pv. tomato (strain ATCC BAA-871 / DC3000)).